Here is an 85-residue protein sequence, read N- to C-terminus: U4-theraphotoxin-Hhn1a (85 aa).

Positions 1-22 are cleaved as a signal peptide; sequence MKVTLISILTCAAVLVLHTTAA. A propeptide spanning residues 23-48 is cleaved from the precursor; it reads EELEAESQLMEVGMPDTELAAVDEER. Intrachain disulfides connect C52–C66, C56–C77, and C71–C82.

This sequence belongs to the neurotoxin 12 (Hwtx-2) family. 02 (Hwtx-2) subfamily. In terms of assembly, monomer. As to expression, expressed by the venom gland.

It is found in the secreted. Functionally, neurotoxin active on both insects and mammals. In Cyriopagopus hainanus (Chinese bird spider), this protein is U4-theraphotoxin-Hhn1a.